Consider the following 109-residue polypeptide: Thiosulfate sulfurtransferase GlpE (109 aa).

Residues 17–105 (HQQTAVLVDI…WHRHFPAEVA (89 aa)) enclose the Rhodanese domain. Residue cysteine 65 is the Cysteine persulfide intermediate of the active site.

This sequence belongs to the GlpE family.

The protein resides in the cytoplasm. The enzyme catalyses thiosulfate + hydrogen cyanide = thiocyanate + sulfite + 2 H(+). It catalyses the reaction thiosulfate + [thioredoxin]-dithiol = [thioredoxin]-disulfide + hydrogen sulfide + sulfite + 2 H(+). Its function is as follows. Transferase that catalyzes the transfer of sulfur from thiosulfate to thiophilic acceptors such as cyanide or dithiols. May function in a CysM-independent thiosulfate assimilation pathway by catalyzing the conversion of thiosulfate to sulfite, which can then be used for L-cysteine biosynthesis. The protein is Thiosulfate sulfurtransferase GlpE of Klebsiella pneumoniae subsp. pneumoniae (strain ATCC 700721 / MGH 78578).